A 93-amino-acid polypeptide reads, in one-letter code: MTRKKTNPFVAHHLLAKIEKVNMKEEKETIVTWSRASSILPTMVGHTIAIHNGKEHIPIYITNPMVGRKLGEFVPTRHFTSYENARKDTKSRR.

The protein belongs to the universal ribosomal protein uS19 family.

It localises to the plastid. The protein localises to the chloroplast. Protein S19 forms a complex with S13 that binds strongly to the 16S ribosomal RNA. The chain is Small ribosomal subunit protein uS19c from Brachypodium distachyon (Purple false brome).